A 119-amino-acid chain; its full sequence is Small ribosomal subunit protein bS16 (119 aa).

It belongs to the bacterial ribosomal protein bS16 family.

The polypeptide is Small ribosomal subunit protein bS16 (Chlamydia felis (strain Fe/C-56) (Chlamydophila felis)).